Here is a 437-residue protein sequence, read N- to C-terminus: 3-ketoacyl-CoA thiolase (437 aa).

The active-site Acyl-thioester intermediate is Cys99. Active-site proton acceptor residues include His392 and Cys422.

It belongs to the thiolase-like superfamily. Thiolase family. In terms of assembly, heterotetramer of two alpha chains (FadJ) and two beta chains (FadI).

The protein resides in the cytoplasm. It carries out the reaction an acyl-CoA + acetyl-CoA = a 3-oxoacyl-CoA + CoA. Its pathway is lipid metabolism; fatty acid beta-oxidation. In terms of biological role, catalyzes the final step of fatty acid oxidation in which acetyl-CoA is released and the CoA ester of a fatty acid two carbons shorter is formed. The polypeptide is 3-ketoacyl-CoA thiolase (Erwinia tasmaniensis (strain DSM 17950 / CFBP 7177 / CIP 109463 / NCPPB 4357 / Et1/99)).